Reading from the N-terminus, the 231-residue chain is Claudin-10 (231 aa).

The chain crosses the membrane as a helical span at residues 1–21 (MASTASEIIAFMVSISGWVLV). The Extracellular portion of the chain corresponds to 22-80 (SSTLPTDYWKVSTIDGTVITTATYWANLWKTCVTDSTGVSNCKDFPSMLALDGYIQACR). A helical transmembrane segment spans residues 81–101 (GLMIAAVSLGFFGSIFALIGM). At 102–115 (KCTKVGGSDKAKAK) the chain is on the cytoplasmic side. A helical transmembrane segment spans residues 116–136 (IACLAGIVFILSGLCSMTGCS). The Extracellular segment spans residues 137–160 (LYANKITTEFFDPLFVEQKYELGA). A helical membrane pass occupies residues 161–181 (ALFIGWAGASLCLIGGVIFCF). Residues 182–231 (SISDNNKAPRMGYTYNGATSVMSSRTKYHGREGDLKTPNPSKQFDKNAYV) are Cytoplasmic-facing.

Belongs to the claudin family. In terms of assembly, can form homodimers both in trans (interaction between CLDN10 molecules in opposing membranes) and in cis (interaction between CLDN10 molecules within one membrane). Interacts with CLDN19.

It localises to the cell junction. The protein localises to the tight junction. It is found in the cell membrane. The enzyme catalyses Na(+)(in) = Na(+)(out). It carries out the reaction Li(+)(in) = Li(+)(out). It catalyses the reaction K(+)(in) = K(+)(out). The catalysed reaction is Rb(+)(in) = Rb(+)(out). The enzyme catalyses Cs(+)(in) = Cs(+)(out). It carries out the reaction NH4(+)(in) = NH4(+)(out). It catalyses the reaction methylamine(out) = methylamine(in). The catalysed reaction is Mg(2+)(in) = Mg(2+)(out). The enzyme catalyses Ca(2+)(in) = Ca(2+)(out). It carries out the reaction Sr(2+)(in) = Sr(2+)(out). It catalyses the reaction chloride(in) = chloride(out). The catalysed reaction is nitrate(in) = nitrate(out). Forms paracellular channels: polymerizes in tight junction strands with cation- and anion-selective channels through the strands, conveying epithelial permeability in a process known as paracellular tight junction permeability. In sweat glands and in the thick ascending limb (TAL) of Henle's loop in kidney, it controls paracellular sodium permeability which is essential for proper sweat production and renal function. In renal proximal tubules, it conveys selective chloride over hydrogencarbonate anion permeability which is required for renal chloride reabsorption and salt homeostasis. The sequence is that of Claudin-10 (CLDN10) from Bos taurus (Bovine).